Consider the following 363-residue polypeptide: Phosphoribosylformylglycinamidine cyclo-ligase (363 aa).

It belongs to the AIR synthase family.

It localises to the cytoplasm. The catalysed reaction is 2-formamido-N(1)-(5-O-phospho-beta-D-ribosyl)acetamidine + ATP = 5-amino-1-(5-phospho-beta-D-ribosyl)imidazole + ADP + phosphate + H(+). It functions in the pathway purine metabolism; IMP biosynthesis via de novo pathway; 5-amino-1-(5-phospho-D-ribosyl)imidazole from N(2)-formyl-N(1)-(5-phospho-D-ribosyl)glycinamide: step 2/2. The protein is Phosphoribosylformylglycinamidine cyclo-ligase of Bartonella tribocorum (strain CIP 105476 / IBS 506).